Here is a 426-residue protein sequence, read N- to C-terminus: MVDTESQKEKNHLNHKIYLDYNATTPPAREVVGTVAEALQEAWGNPSSSYTAGCKAKELIDTARARIAKMVGGKPEDIIFTSGGTEANNMVLFSAVENFNRTSKERQNNNVDWALPHIITSNVEHDSVALPLLQLQKTHKAEITFVPVSTVTGRVEVEDVISAVRPNTCLVSIMLANNETGVIMPVGELSQCLASLSRKRSAQGLPEILLHTDAAQALGKVEVDVQELGVNYLTIVGHKFYGPRIGALYVGGLGHQSPLLPMLYGGGREGNFRPGTENTPMIAGLGQAAELVSLHCAAYEVHMRRIRDYLEQKLEAVFGDRIRLNSRFPGAERLPNTCNVSLLKPAVLGREWLSHCQYLQASVGAACHSDRGDSPSPVLLKSGVPQDAARSAVRLSVGRETSQDDVDLIVRDLEQAAQLLGMNKQS.

The residue at position 239 (Lys-239) is an N6-(pyridoxal phosphate)lysine. Cys-367 functions as the S-selanylcysteine intermediate in the catalytic mechanism.

This sequence belongs to the class-V pyridoxal-phosphate-dependent aminotransferase family. Homodimer. Requires pyridoxal 5'-phosphate as cofactor.

It localises to the cytoplasm. Its subcellular location is the cytosol. The catalysed reaction is L-selenocysteine + AH2 = hydrogenselenide + L-alanine + A + H(+). In terms of biological role, catalyzes the decomposition of L-selenocysteine to L-alanine and elemental selenium. The chain is Selenocysteine lyase (scly) from Xenopus laevis (African clawed frog).